Reading from the N-terminus, the 169-residue chain is NAD(P)H-quinone oxidoreductase subunit J, chloroplastic (169 aa).

Belongs to the complex I 30 kDa subunit family. In terms of assembly, NDH is composed of at least 16 different subunits, 5 of which are encoded in the nucleus.

It is found in the plastid. The protein localises to the chloroplast thylakoid membrane. It catalyses the reaction a plastoquinone + NADH + (n+1) H(+)(in) = a plastoquinol + NAD(+) + n H(+)(out). The enzyme catalyses a plastoquinone + NADPH + (n+1) H(+)(in) = a plastoquinol + NADP(+) + n H(+)(out). Its function is as follows. NDH shuttles electrons from NAD(P)H:plastoquinone, via FMN and iron-sulfur (Fe-S) centers, to quinones in the photosynthetic chain and possibly in a chloroplast respiratory chain. The immediate electron acceptor for the enzyme in this species is believed to be plastoquinone. Couples the redox reaction to proton translocation, and thus conserves the redox energy in a proton gradient. This is NAD(P)H-quinone oxidoreductase subunit J, chloroplastic from Anthoceros angustus (Hornwort).